Consider the following 298-residue polypeptide: uncharacterized protein (298 aa).

The next 10 helical transmembrane spans lie at 5-25, 36-56, 76-96, 97-117, 124-144, 147-167, 181-201, 216-236, 244-264, and 272-292; these read ILFG…MSAF, MENV…IYPF, VVVG…ISLA, TATA…PLLL, STLI…DPSV, VGPV…LAYI, VILA…FIDI, ILWI…LTYA, IIAP…LYLG, and SSLG…PALL. Positions 17–141 constitute an EamA 1 domain; that stretch reads LCFGIMSAFV…GIVGVVLISD (125 aa). Residues 183–288 enclose the EamA 2 domain; the sequence is LAFAFGMSLL…ILCSGLLIAL (106 aa).

It belongs to the EamA transporter family.

The protein localises to the cell membrane. This is an uncharacterized protein from Helicobacter pylori (strain ATCC 700392 / 26695) (Campylobacter pylori).